The primary structure comprises 331 residues: tRNA N6-adenosine threonylcarbamoyltransferase (331 aa).

Fe cation is bound by residues H107 and H111. Substrate-binding positions include 129-133, D162, G175, and N269; that span reads LVSGG. D297 is a Fe cation binding site.

Belongs to the KAE1 / TsaD family. The cofactor is Fe(2+).

It is found in the cytoplasm. The enzyme catalyses L-threonylcarbamoyladenylate + adenosine(37) in tRNA = N(6)-L-threonylcarbamoyladenosine(37) in tRNA + AMP + H(+). In terms of biological role, required for the formation of a threonylcarbamoyl group on adenosine at position 37 (t(6)A37) in tRNAs that read codons beginning with adenine. Is involved in the transfer of the threonylcarbamoyl moiety of threonylcarbamoyl-AMP (TC-AMP) to the N6 group of A37, together with TsaE and TsaB. TsaD likely plays a direct catalytic role in this reaction. This is tRNA N6-adenosine threonylcarbamoyltransferase from Wolinella succinogenes (strain ATCC 29543 / DSM 1740 / CCUG 13145 / JCM 31913 / LMG 7466 / NCTC 11488 / FDC 602W) (Vibrio succinogenes).